The following is a 124-amino-acid chain: MHLKPVETVQDTPTFATADPTILGPIPMEHGLILAAIIFAIGLCGVMVRRNFLFMLMSLEIMMSAAGLAFIVAGSHWLSADGQIMFIFILTLAAAEASLGLAILLQFYHRRGHLDVDSANEMRG.

The next 3 membrane-spanning stretches (helical) occupy residues 28 to 48, 52 to 72, and 84 to 104; these read MEHG…GVMV, FLFM…AFIV, and IMFI…LAIL.

The protein belongs to the complex I subunit 4L family. As to quaternary structure, NDH-1 is composed of 14 different subunits. Subunits NuoA, H, J, K, L, M, N constitute the membrane sector of the complex.

Its subcellular location is the cell inner membrane. The enzyme catalyses a quinone + NADH + 5 H(+)(in) = a quinol + NAD(+) + 4 H(+)(out). In terms of biological role, NDH-1 shuttles electrons from NADH, via FMN and iron-sulfur (Fe-S) centers, to quinones in the respiratory chain. The immediate electron acceptor for the enzyme in this species is believed to be ubiquinone. Couples the redox reaction to proton translocation (for every two electrons transferred, four hydrogen ions are translocated across the cytoplasmic membrane), and thus conserves the redox energy in a proton gradient. This chain is NADH-quinone oxidoreductase subunit K, found in Psychrobacter sp. (strain PRwf-1).